The primary structure comprises 508 residues: Glycogen synthase (508 aa).

Lys27 contacts ADP-alpha-D-glucose.

Belongs to the glycosyltransferase 1 family. Bacterial/plant glycogen synthase subfamily.

It carries out the reaction [(1-&gt;4)-alpha-D-glucosyl](n) + ADP-alpha-D-glucose = [(1-&gt;4)-alpha-D-glucosyl](n+1) + ADP + H(+). Its pathway is glycan biosynthesis; glycogen biosynthesis. Functionally, synthesizes alpha-1,4-glucan chains using ADP-glucose. The chain is Glycogen synthase from Photobacterium profundum (strain SS9).